A 254-amino-acid polypeptide reads, in one-letter code: U3 small nucleolar RNA-associated protein NOL7 (254 aa).

The segment at 1 to 90 is disordered; sequence MVQLRPRLSR…ASARRDKTLL (90 aa). Acidic residues-rich tracts occupy residues 18 to 31 and 48 to 61; these read MVDEDQAASEEEEA and PLDEEEDADDEAPE. A compositionally biased stretch (basic and acidic residues) spans 71–90; that stretch reads EAREEELRVRASARRDKTLL. Lys127 is covalently cross-linked (Glycyl lysine isopeptide (Lys-Gly) (interchain with G-Cter in SUMO2)). Phosphoserine is present on Ser129. Lys157 is covalently cross-linked (Glycyl lysine isopeptide (Lys-Gly) (interchain with G-Cter in SUMO2)). The tract at residues 235-254 is disordered; the sequence is NAKRFKKRWMAKKMKKKTYK.

This sequence belongs to the UTP16 family. In terms of assembly, part of the small subunit (SSU) processome, composed of more than 70 proteins and the RNA chaperone small nucleolar RNA (snoRNA) U3.

The protein localises to the nucleus. It localises to the nucleolus. Functionally, functions as part of the small subunit (SSU) processome, first precursor of the small eukaryotic ribosomal subunit that coordinates the first two steps of ribosome biogenesis in transcription of the primary transcript pre-RNA and pre-18S processing. During the assembly of the SSU processome in the nucleolus, many ribosome biogenesis factors, an RNA chaperone and ribosomal proteins associate with the nascent pre-rRNA and work in concert to generate RNA folding, modifications, rearrangements and cleavage as well as targeted degradation of pre-ribosomal RNA by the RNA exosome. This subunit is required for processing of the 5'-external transcribed spacer sequence (5'ETS) of the primary transcript pre-rRNA to yield the 18S rRNA. Also plays a role in maintaining early pre-rRNA levels, either by assisting in its transcription or stability. The sequence is that of U3 small nucleolar RNA-associated protein NOL7 (Nol7) from Mus musculus (Mouse).